Here is a 120-residue protein sequence, read N- to C-terminus: BLOC-1-related complex subunit 8 (120 aa).

The tract at residues Met101–Ala120 is disordered. Ser109 is subject to Phosphoserine.

Belongs to the BORCS8 family. As to quaternary structure, component of the BLOC-one-related complex (BORC) which is composed of BLOC1S1, BLOC1S2, BORCS5, BORCS6, BORCS7, BORCS8, KXD1 and SNAPIN.

It is found in the lysosome membrane. In terms of biological role, as part of the BLOC-one-related complex (BORC), it plays a role in the movement and localization of lysosomes at the cell periphery. Associated with the cytosolic face of lysosomes, BORC recruits ARL8B to the lysosomal membrane and couples lysosomes to microtubule plus-end-directed kinesin motors, driving lysosome movement toward the cell periphery. The protein is BLOC-1-related complex subunit 8 of Mus musculus (Mouse).